A 658-amino-acid polypeptide reads, in one-letter code: NADPH-dependent diflavin oxidoreductase 1 (658 aa).

In terms of domain architecture, Flavodoxin-like spans 16–160; the sequence is LTILYMTQTG…ELGPWMNRFW (145 aa). FMN-binding positions include 22 to 27, 69 to 72, 107 to 116, and aspartate 142; these read TQTGTS, STTG, and LGDSTYPRFC. The region spanning 215–502 is the FAD-binding FR-type domain; it reads QGWSISILDK…IKPGYLTLPP (288 aa). Residues arginine 400, 430–433, and 474–477 contribute to the FAD site; these read REFS and GLCT. Residues threonine 514, 574–575, and 580–584 contribute to the NADP(+) site; these read SR and KTYVQ. Tryptophan 657 serves as a coordination point for FAD.

It belongs to the NADPH-dependent diflavin oxidoreductase NDOR1 family. In the N-terminal section; belongs to the flavodoxin family. This sequence in the C-terminal section; belongs to the flavoprotein pyridine nucleotide cytochrome reductase family. Interacts with DRE2; as part of the cytosolic iron-sulfur (Fe-S) protein assembly (CIA) machinery. FAD serves as cofactor. FMN is required as a cofactor.

The protein localises to the cytoplasm. It is found in the mitochondrion. The enzyme catalyses 2 oxidized [2Fe-2S]-[protein] + NADPH = 2 reduced [2Fe-2S]-[protein] + NADP(+) + H(+). NADPH-dependent reductase which is a central component of the cytosolic iron-sulfur (Fe-S) protein assembly (CIA) machinery. Transfers electrons from NADPH via its FAD and FMN prosthetic groups to the [2Fe-2S] cluster of DRE2, another key component of the CIA machinery. In turn, this reduced cluster provides electrons for assembly of cytosolic iron-sulfur cluster proteins. Positively controls H(2)O(2)-induced cell death. This is NADPH-dependent diflavin oxidoreductase 1 from Mycosarcoma maydis (Corn smut fungus).